A 316-amino-acid polypeptide reads, in one-letter code: MCMSQFPIEFQIECAASTINHARDIYAKFILQPLSYTQALTMGNSLRRVLLSELESISITAVRIAGASHELATLKGVREDVLQIMLNLKQIVWRGQLKKQPTITRLKVQGPAIVTAAAFQSEANSSANIIDTCQYIATIDTQDILEMECQLEQSSGYRLAKPSEMIDWLPIDGVFMPVKRVNFWVDKALVDKVLVDKALHLEIWTNGSISPQEALHQAARILTHWFNPLQTLEWKTSHTKNEQTMAQLSNMLIEELDLSVRAYNCLKRAQIHSVADLMQYTQEELLALKNFGQKSVEEVNKALEQKLHCQLKKYVD.

An alpha N-terminal domain (alpha-NTD) region spans residues 1 to 233 (MCMSQFPIEF…HWFNPLQTLE (233 aa)). An alpha C-terminal domain (alpha-CTD) region spans residues 245-316 (MAQLSNMLIE…LHCQLKKYVD (72 aa)).

It belongs to the RNA polymerase alpha chain family. In terms of assembly, in plastids the minimal PEP RNA polymerase catalytic core is composed of four subunits: alpha, beta, beta', and beta''. When a (nuclear-encoded) sigma factor is associated with the core the holoenzyme is formed, which can initiate transcription.

The protein localises to the plastid. It is found in the chloroplast. It catalyses the reaction RNA(n) + a ribonucleoside 5'-triphosphate = RNA(n+1) + diphosphate. DNA-dependent RNA polymerase catalyzes the transcription of DNA into RNA using the four ribonucleoside triphosphates as substrates. The sequence is that of DNA-directed RNA polymerase subunit alpha from Cyanidioschyzon merolae (strain NIES-3377 / 10D) (Unicellular red alga).